The sequence spans 468 residues: Ubiquinone biosynthesis monooxygenase COQ6, mitochondrial (468 aa).

Residues Met-1–Ser-28 constitute a mitochondrion transit peptide.

The protein belongs to the UbiH/COQ6 family. In terms of assembly, component of a multi-subunit COQ enzyme complex, composed of at least COQ3, COQ4, COQ5, COQ6, COQ7 and COQ9. Interacts with COQ8B and COQ7. FAD is required as a cofactor. Widely expressed.

The protein localises to the mitochondrion inner membrane. It is found in the golgi apparatus. The protein resides in the cell projection. The catalysed reaction is 4-hydroxy-3-(all-trans-decaprenyl)benzoate + 2 reduced [2Fe-2S]-[ferredoxin] + O2 + 2 H(+) = 3,4-dihydroxy-5-(all-trans-decaprenyl)benzoate + 2 oxidized [2Fe-2S]-[ferredoxin] + H2O. It catalyses the reaction 2-methoxy-6-(all-trans-decaprenyl)phenol + 2 reduced [2Fe-2S]-[ferredoxin] + O2 + 2 H(+) = 2-methoxy-6-(all-trans-decaprenyl)benzene-1,4-diol + 2 oxidized [2Fe-2S]-[ferredoxin] + H2O. Its pathway is cofactor biosynthesis; ubiquinone biosynthesis. Its function is as follows. FAD-dependent monooxygenase required for two non-consecutive steps during ubiquinone biosynthesis. Required for the C5-ring hydroxylation during ubiquinone biosynthesis by catalyzing the hydroxylation of 4-hydroxy-3-(all-trans-decaprenyl)benzoic acid to 3,4-dihydroxy-5-(all-trans-decaprenyl)benzoic acid. Also acts downstream of COQ4, for the C1-hydroxylation during ubiquinone biosynthesis by catalyzing the hydroxylation of 2-methoxy-6-(all-trans-decaprenyl)phenol to 2-methoxy-6-(all-trans-decaprenyl)benzene-1,4-diol. The electrons required for the hydroxylation reaction are funneled indirectly to COQ6 from NADPH via a ferredoxin/ferredoxin reductase system composed of FDX2 and FDXR. This chain is Ubiquinone biosynthesis monooxygenase COQ6, mitochondrial, found in Homo sapiens (Human).